Reading from the N-terminus, the 202-residue chain is Putative 3-methyladenine DNA glycosylase (202 aa).

The protein belongs to the DNA glycosylase MPG family.

The sequence is that of Putative 3-methyladenine DNA glycosylase from Rhodopseudomonas palustris (strain BisB5).